The chain runs to 194 residues: dTTP/UTP pyrophosphatase (194 aa).

Catalysis depends on Asp69, which acts as the Proton acceptor.

The protein belongs to the Maf family. YhdE subfamily. Requires a divalent metal cation as cofactor.

It is found in the cytoplasm. It carries out the reaction dTTP + H2O = dTMP + diphosphate + H(+). It catalyses the reaction UTP + H2O = UMP + diphosphate + H(+). Functionally, nucleoside triphosphate pyrophosphatase that hydrolyzes dTTP and UTP. May have a dual role in cell division arrest and in preventing the incorporation of modified nucleotides into cellular nucleic acids. The sequence is that of dTTP/UTP pyrophosphatase from Symbiobacterium thermophilum (strain DSM 24528 / JCM 14929 / IAM 14863 / T).